The chain runs to 82 residues: Small ribosomal subunit protein bS18 (82 aa).

Residues 1 to 20 (MAEVSSSTVRRPFHRRRKTC) form a disordered region.

The protein belongs to the bacterial ribosomal protein bS18 family. Part of the 30S ribosomal subunit. Forms a tight heterodimer with protein bS6.

In terms of biological role, binds as a heterodimer with protein bS6 to the central domain of the 16S rRNA, where it helps stabilize the platform of the 30S subunit. The protein is Small ribosomal subunit protein bS18 of Allorhizobium ampelinum (strain ATCC BAA-846 / DSM 112012 / S4) (Agrobacterium vitis (strain S4)).